The following is a 227-amino-acid chain: Cytidylate kinase (227 aa).

12-20 (GPSGSGKGT) is a binding site for ATP.

The protein belongs to the cytidylate kinase family. Type 1 subfamily.

The protein localises to the cytoplasm. The catalysed reaction is CMP + ATP = CDP + ADP. It carries out the reaction dCMP + ATP = dCDP + ADP. This is Cytidylate kinase from Nitrosococcus oceani (strain ATCC 19707 / BCRC 17464 / JCM 30415 / NCIMB 11848 / C-107).